The following is a 478-amino-acid chain: Calcitonin receptor (478 aa).

The first 22 residues, 1–22 (MRFTFTRQFLAFFILISNPASI), serve as a signal peptide directing secretion. Residues 23 to 146 (LPRSENLTFP…FTPEKLQNAY (124 aa)) are Extracellular-facing. Asn-28, Asn-73, Asn-125, and Asn-130 each carry an N-linked (GlcNAc...) asparagine glycan. 3 cysteine pairs are disulfide-bonded: Cys-55–Cys-81, Cys-72–Cys-112, and Cys-95–Cys-134. A helical membrane pass occupies residues 147–169 (VLYYLAIVGHSMSIITLVVSLGI). The Cytoplasmic portion of the chain corresponds to 170-181 (FVYFRSLGCQRV). Residues 182–202 (TLHKNMFLTYILNSMIIIIHL) traverse the membrane as a helical segment. At 203-219 (VEVVPNGELVRKDPVSC) the chain is on the extracellular side. Cys-219 and Cys-289 are oxidised to a cystine. A helical membrane pass occupies residues 220 to 242 (KILHFFHQYMMACNYFWMLCEGI). At 243 to 259 (YLHTLIVVSVFNEAKHL) the chain is on the cytoplasmic side. Residues 260 to 280 (RWYYLLGWGFPLVPTTIHAIT) traverse the membrane as a helical segment. Topologically, residues 281 to 296 (RALYFNDNCWISVDTH) are extracellular. The helical transmembrane segment at 297 to 320 (LLYIIHGPVMVALVVNFFFLLNIV) threads the bilayer. Over 321–340 (RVLVTKMRETHEAESYMYLK) the chain is Cytoplasmic. The helical transmembrane segment at 341–359 (AVKATMILVPLLGIQFVVF) threads the bilayer. The Extracellular segment spans residues 360 to 367 (PWRPSNKV). A helical membrane pass occupies residues 368–394 (LGKIYDYFMHSLIHFQGFFVATIYCFC). Topologically, residues 395 to 478 (NNEVQTTLKR…LNIIEKESSA (84 aa)) are cytoplasmic.

It belongs to the G-protein coupled receptor 2 family. Heterodimer of CALCR and RAMP1, RAMP2 or RAMP3; the receptor complexes function as AMYR1, AMYR2 and AMYR3 receptors, respectively, and respond to amylin/IAPP, calcitonin/CT and CGRP1 ligands. Interacts with GPRASP2.

The protein resides in the cell membrane. G protein-coupled receptor activated by ligand peptides amylin (IAPP), calcitonin (CT/CALCA) and calcitonin gene-related peptide type 1 (CGRP1/CALCA). CALCR interacts with receptor-activity-modifying proteins RAMP1, 2 and 3 to form receptor complexes AMYR1, 2 and 3, respectively. IAPP, CT and CGRP1 activate CALCR and AMYRs with distinct modes of receptor activation resulting in specific phenotypes. Ligand binding causes a conformation change that triggers signaling via guanine nucleotide-binding proteins (G proteins) and modulates the activity of downstream effectors. Activates cAMP-dependent pathway. The protein is Calcitonin receptor of Cavia porcellus (Guinea pig).